A 477-amino-acid polypeptide reads, in one-letter code: Ribulose bisphosphate carboxylase large chain (477 aa).

A propeptide spanning residues 1 to 2 (MS) is cleaved from the precursor. The residue at position 3 (Pro3) is an N-acetylproline. Residue Lys14 is modified to N6,N6,N6-trimethyllysine. 2 residues coordinate substrate: Asn123 and Thr173. Lys175 acts as the Proton acceptor in catalysis. Lys177 is a substrate binding site. Lys201, Asp203, and Glu204 together coordinate Mg(2+). Lys201 carries the post-translational modification N6-carboxylysine. Residue His294 is the Proton acceptor of the active site. Residues Arg295, His327, and Ser379 each coordinate substrate.

Belongs to the RuBisCO large chain family. Type I subfamily. In terms of assembly, heterohexadecamer of 8 large chains and 8 small chains; disulfide-linked. The disulfide link is formed within the large subunit homodimers. The cofactor is Mg(2+). In terms of processing, the disulfide bond which can form in the large chain dimeric partners within the hexadecamer appears to be associated with oxidative stress and protein turnover.

It localises to the plastid. It is found in the chloroplast. It catalyses the reaction 2 (2R)-3-phosphoglycerate + 2 H(+) = D-ribulose 1,5-bisphosphate + CO2 + H2O. The catalysed reaction is D-ribulose 1,5-bisphosphate + O2 = 2-phosphoglycolate + (2R)-3-phosphoglycerate + 2 H(+). RuBisCO catalyzes two reactions: the carboxylation of D-ribulose 1,5-bisphosphate, the primary event in carbon dioxide fixation, as well as the oxidative fragmentation of the pentose substrate in the photorespiration process. Both reactions occur simultaneously and in competition at the same active site. The chain is Ribulose bisphosphate carboxylase large chain from Nicotiana sylvestris (Wood tobacco).